Consider the following 940-residue polypeptide: Vacuolar protein sorting-associated protein 54 (940 aa).

Position 30 is a phosphothreonine (threonine 30). Positions 192–218 (QQLERDKPLENGAQGAPGPGTGGQTPT) are disordered. Residues 299-325 (HAILAEMEQAADQVRQLRAALAELHSH) are a coiled coil.

The protein belongs to the VPS54 family.

It localises to the golgi apparatus. The protein resides in the trans-Golgi network. Functionally, may be involved in retrograde transport from early and late endosomes to late Golgi. Required during spermatogenesis for sperm individualization. This Drosophila melanogaster (Fruit fly) protein is Vacuolar protein sorting-associated protein 54 (scat).